The primary structure comprises 818 residues: MGSDLKARLKAKFSRRSSTSGSVKSGHSHSHGETQLSQRDESRSLASTDNHSRPASVRLDPQSSSNLGAPAPAPDADEVPVRIVISPEDSTATSSSTASTLPSEEVQPQESVTRDPSSQLSAAPKRRAASDGPGNDLHHPMAATTSSLASINENQTLVDASIAASPPATKLPPSVSTSARNTAASSAAAAAAASAAVAVTAAAAAADPDNDDDDDDHLDPLHRGPAASDVLTPAPATAPAPVPATLSASSIARPTGPPRRQSLLPNRQDALIKTLLQAANINEADLTADHLLSINANMVTRKIWVKRAGASATLITINEDDLVDDVRDMILKKYTNSLGRHFDAPDLTLRIFPREERQERLLGPEEPMGRTIDAYFPGGQTVDEALVIDIPTRRTPRPSPRGAVSHPTAVYYAHDTGRPSEAGEGYFPPVGAIPSPNLEVPGAAPNGGPPPPHAIHIQHTGHLPHSISILGTGQVPPIPSPGRSHAYKTRPNRPQLGRTHTSSPTFINGVPSNVGGPPTAHPVHSSFHPRLPPSRTQSNASAESAAIVPPAPPLATPPAPEIPSAIQRISTPPPRIASPRPSSARPARKKIAPAHPVLPAGMLAGGVPPINVLIVEDNPINLKLLEAFVKRLKVRWKTAMNGRDAVKKWKGGGFHLVLMDIQLPIMNGLDATKEIRRLERVNSIGVFSSSASGVFSGSVTSEPEGTEGDIEDKDRLANIELFKSPVIIVALTASSLQSDRHEALAAGCNDFLTKPVNFVWLERKVMEWGCMQALIDFDGWRQWKDFAQDAEENDAAKKAAGVKAKSKKNRLSVTTAAA.

Residues 611-769 (NVLIVEDNPI…WLERKVMEWG (159 aa)) enclose the Response regulatory domain. Aspartate 660 carries the 4-aspartylphosphate modification.

This sequence belongs to the SSK1 family.

Its subcellular location is the cytoplasm. In terms of biological role, two-domain response regulator protein in the two-component signal transduction system of the HOG1 pathway. Modulates stress response, melanin biosynthesis and virulence via its regulation of the phosphorylation of HOG1. The sequence is that of Response regulator SSK1 from Verticillium dahliae (strain VdLs.17 / ATCC MYA-4575 / FGSC 10137) (Verticillium wilt).